We begin with the raw amino-acid sequence, 162 residues long: Putative 4-hydroxy-4-methyl-2-oxoglutarate aldolase (162 aa).

Substrate is bound by residues 75 to 78 (GDML) and Arg-97. Asp-98 serves as a coordination point for a divalent metal cation.

This sequence belongs to the class II aldolase/RraA-like family. As to quaternary structure, homotrimer. A divalent metal cation is required as a cofactor.

It catalyses the reaction 4-hydroxy-4-methyl-2-oxoglutarate = 2 pyruvate. The enzyme catalyses oxaloacetate + H(+) = pyruvate + CO2. Catalyzes the aldol cleavage of 4-hydroxy-4-methyl-2-oxoglutarate (HMG) into 2 molecules of pyruvate. Also contains a secondary oxaloacetate (OAA) decarboxylase activity due to the common pyruvate enolate transition state formed following C-C bond cleavage in the retro-aldol and decarboxylation reactions. This chain is Putative 4-hydroxy-4-methyl-2-oxoglutarate aldolase, found in Pseudomonas syringae pv. tomato (strain ATCC BAA-871 / DC3000).